The primary structure comprises 262 residues: 2-keto-4-pentenoate hydratase (262 aa).

It belongs to the hydratase/decarboxylase family. MhpD subfamily. Requires a divalent metal cation as cofactor.

It carries out the reaction (S)-4-hydroxy-2-oxopentanoate = (2Z)-2-hydroxypenta-2,4-dienoate + H2O. It functions in the pathway aromatic compound metabolism; 3-phenylpropanoate degradation. In terms of biological role, catalyzes the conversion of 2-hydroxypentadienoic acid (enolic form of 2-oxopent-4-enoate) to 4-hydroxy-2-ketopentanoic acid. The chain is 2-keto-4-pentenoate hydratase from Burkholderia vietnamiensis (strain G4 / LMG 22486) (Burkholderia cepacia (strain R1808)).